The sequence spans 173 residues: MQKVKLPLTLDPVRTAQKRLDYQGIYTPDQVERVAESVVSVDSDVECSMSFAIDNQRLAVLTGDAVVTVSLECQRCGKPFTHQVHTTYCFSPVRSDEQAEALPEAYEPIEVNEFGEIDLLATVEDEIILALPVVPVHDSEHCEVSEADMVFGELPDEAQKPNPFAVLASLKRK.

It belongs to the DUF177 domain family.

Functionally, plays a role in synthesis, processing and/or stability of 23S rRNA. In Salmonella typhi, this protein is Large ribosomal RNA subunit accumulation protein YceD (yceD).